An 851-amino-acid polypeptide reads, in one-letter code: Pentatricopeptide repeat-containing protein At3g54980, mitochondrial (851 aa).

A mitochondrion-targeting transit peptide spans 1-26 (MRSLLVFRKIPSRIRLRNLRNNKPFC). 19 PPR repeats span residues 162-196 (NSRA…DVIP), 197-231 (FFPY…GVDG), 232-266 (DNVT…GAEP), 267-301 (DSLL…KLCV), 303-337 (SQET…GISM), 338-372 (NVVA…GPSP), 373-407 (NSVT…GLTP), 408-438 (SVFH…SFET), 442-476 (NVFV…GIGP), 477-511 (NVVS…GLKP), 512-546 (NNYT…NIEV), 547-577 (NGVV…MIEE), 583-617 (SCMS…GISP), 618-652 (NVIT…GVKL), 653-687 (DIPA…GLNP), 688-722 (SQPI…GLRC), 723-757 (DLGT…GLVP), 758-792 (DEII…NVTP), and 793-827 (NVLI…GILP).

This sequence belongs to the PPR family. P subfamily.

The protein resides in the mitochondrion. This Arabidopsis thaliana (Mouse-ear cress) protein is Pentatricopeptide repeat-containing protein At3g54980, mitochondrial.